Here is a 315-residue protein sequence, read N- to C-terminus: Type II restriction enzyme AvaI (315 aa).

It carries out the reaction Endonucleolytic cleavage of DNA to give specific double-stranded fragments with terminal 5'-phosphates.. In terms of biological role, a P subtype restriction enzyme that recognizes the double-stranded sequence 5'-CYCGRG-3' and cleaves after C-1. This chain is Type II restriction enzyme AvaI, found in Anabaena variabilis.